The chain runs to 327 residues: Aspartate--ammonia ligase (327 aa).

Belongs to the class-II aminoacyl-tRNA synthetase family. AsnA subfamily.

It is found in the cytoplasm. It catalyses the reaction L-aspartate + NH4(+) + ATP = L-asparagine + AMP + diphosphate + H(+). It functions in the pathway amino-acid biosynthesis; L-asparagine biosynthesis; L-asparagine from L-aspartate (ammonia route): step 1/1. This chain is Aspartate--ammonia ligase, found in Bacillus cereus (strain B4264).